Reading from the N-terminus, the 178-residue chain is ATP-dependent protease subunit HslV (178 aa).

Residue T2 is part of the active site. 3 residues coordinate Na(+): S159, C162, and T165.

It belongs to the peptidase T1B family. HslV subfamily. As to quaternary structure, a double ring-shaped homohexamer of HslV is capped on each side by a ring-shaped HslU homohexamer. The assembly of the HslU/HslV complex is dependent on binding of ATP.

The protein resides in the cytoplasm. The enzyme catalyses ATP-dependent cleavage of peptide bonds with broad specificity.. Its activity is regulated as follows. Allosterically activated by HslU binding. In terms of biological role, protease subunit of a proteasome-like degradation complex believed to be a general protein degrading machinery. This chain is ATP-dependent protease subunit HslV, found in Buchnera aphidicola subsp. Cinara cedri (strain Cc).